A 72-amino-acid chain; its full sequence is Translation initiation factor IF-1 (72 aa).

The 72-residue stretch at 1-72 (MSNDDSIEFE…TKGRITYRMK (72 aa)) folds into the S1-like domain.

This sequence belongs to the IF-1 family. In terms of assembly, component of the 30S ribosomal translation pre-initiation complex which assembles on the 30S ribosome in the order IF-2 and IF-3, IF-1 and N-formylmethionyl-tRNA(fMet); mRNA recruitment can occur at any time during PIC assembly.

It localises to the cytoplasm. Functionally, one of the essential components for the initiation of protein synthesis. Stabilizes the binding of IF-2 and IF-3 on the 30S subunit to which N-formylmethionyl-tRNA(fMet) subsequently binds. Helps modulate mRNA selection, yielding the 30S pre-initiation complex (PIC). Upon addition of the 50S ribosomal subunit IF-1, IF-2 and IF-3 are released leaving the mature 70S translation initiation complex. The polypeptide is Translation initiation factor IF-1 (Xanthomonas campestris pv. campestris (strain B100)).